Consider the following 199-residue polypeptide: Holliday junction branch migration complex subunit RuvA (199 aa).

A domain I region spans residues 1 to 63 (MIGCLIGEVF…EDAQQLYGFS (63 aa)). The tract at residues 64–142 (DAQEKTIFRT…TLAQGTSSAA (79 aa)) is domain II. Residues 143 to 150 (ALPQIQFV) form a flexible linker region. Residues 150–199 (VSNSPVAEAEAALQSLGYKPLEAQKAVAAVKADYTESADIIRAALKSMMK) are domain III.

The protein belongs to the RuvA family. Homotetramer. Forms an RuvA(8)-RuvB(12)-Holliday junction (HJ) complex. HJ DNA is sandwiched between 2 RuvA tetramers; dsDNA enters through RuvA and exits via RuvB. An RuvB hexamer assembles on each DNA strand where it exits the tetramer. Each RuvB hexamer is contacted by two RuvA subunits (via domain III) on 2 adjacent RuvB subunits; this complex drives branch migration. In the full resolvosome a probable DNA-RuvA(4)-RuvB(12)-RuvC(2) complex forms which resolves the HJ.

It localises to the cytoplasm. Its function is as follows. The RuvA-RuvB-RuvC complex processes Holliday junction (HJ) DNA during genetic recombination and DNA repair, while the RuvA-RuvB complex plays an important role in the rescue of blocked DNA replication forks via replication fork reversal (RFR). RuvA specifically binds to HJ cruciform DNA, conferring on it an open structure. The RuvB hexamer acts as an ATP-dependent pump, pulling dsDNA into and through the RuvAB complex. HJ branch migration allows RuvC to scan DNA until it finds its consensus sequence, where it cleaves and resolves the cruciform DNA. In Acinetobacter baumannii (strain ACICU), this protein is Holliday junction branch migration complex subunit RuvA.